Here is a 157-residue protein sequence, read N- to C-terminus: Probable succinate transporter subunit YjjB (157 aa).

Transmembrane regions (helical) follow at residues 8 to 28 (FALA…AMVF), 57 to 77 (LNIE…GIQW), 87 to 107 (VFTV…TAMI), and 129 to 149 (FLTA…PGLW).

This sequence belongs to the ThrE exporter (TC 2.A.79) family. In terms of assembly, the transporter is composed of YjjB and YjjP.

The protein resides in the cell inner membrane. Involved in succinate export with YjjP. Both proteins are required for export. In Shigella boydii serotype 4 (strain Sb227), this protein is Probable succinate transporter subunit YjjB.